The primary structure comprises 431 residues: MVRLEKNDPLMLARQLPLKTVALILAGGRGTRLKDLTIKRAKPAVHFGGKFRIIDFALSNCLNSGIRRIGVITQYQSHTLVQHIQRGWSFFSEEMNEFVDLLPAQQRVHGENWYRGTADAVTQNLDIIRRYGAEYIVILAGDHIYKQDYSHMLIDHVEKGARCTVACLPVPVAEAAAFGVMDVDENDLIIDFVEKPANPPTMPSDPTKSLASMGIYIFDAEYLYDLLEEDDKDENSSHDFGKDIIPKITKAGMAYAHPFPLSCVQSDPTAEPYWRDVGTLEAYWKANLDLASVTPELDMYDQNWPIRTHMESLPPAKFVQDRSGSHGMTLNSLVSGGCIISGSVVVQSVLFPRVRINSFCNIDSSVLLPDVWIGRSCRLRRCVIDRACIIPEGMVIGENAEEDARRFYRSEEGIVLVTREMLRKLQIKQER.

Lys39 is a beta-D-fructose 1,6-bisphosphate binding site. Residues Arg40, His46, and Arg52 each coordinate AMP. An alpha-D-glucose 1-phosphate-binding site is contributed by Tyr114. Arg130 contacts AMP. Alpha-D-glucose 1-phosphate-binding positions include Gly179, 194–195, and Ser212; that span reads EK. Residue Arg386 participates in AMP binding. Residues 419 to 423 and 429 to 431 contribute to the beta-D-fructose 1,6-bisphosphate site; these read REMLR and QER.

Belongs to the bacterial/plant glucose-1-phosphate adenylyltransferase family. Homotetramer.

The catalysed reaction is alpha-D-glucose 1-phosphate + ATP + H(+) = ADP-alpha-D-glucose + diphosphate. It functions in the pathway glycan biosynthesis; glycogen biosynthesis. Allosterically activated by fructose-1,6-bisphosphate (F16BP) and inhibited by AMP. Its function is as follows. Involved in the biosynthesis of ADP-glucose, a building block required for the elongation reactions to produce glycogen. Catalyzes the reaction between ATP and alpha-D-glucose 1-phosphate (G1P) to produce pyrophosphate and ADP-Glc. The protein is Glucose-1-phosphate adenylyltransferase of Enterobacter sp. (strain 638).